The following is a 180-amino-acid chain: Meiotic recombination protein rec15 (180 aa).

Homomer. Interacts (via C-terminus) with hop1 (via C-terminus); the interaction is direct. Interacts (via C-terminus) with rec10; the interaction is direct. Interacts with mde2; the interaction is direct.

The protein localises to the nucleus. It localises to the chromosome. Functionally, required during the early stages of meiosis for meiotic recombination. This is Meiotic recombination protein rec15 from Schizosaccharomyces pombe (strain 972 / ATCC 24843) (Fission yeast).